We begin with the raw amino-acid sequence, 242 residues long: Ribonuclease PH (242 aa).

Phosphate is bound by residues Arg89 and 127–129; that span reads GTR.

The protein belongs to the RNase PH family. As to quaternary structure, homohexameric ring arranged as a trimer of dimers.

It carries out the reaction tRNA(n+1) + phosphate = tRNA(n) + a ribonucleoside 5'-diphosphate. Its function is as follows. Phosphorolytic 3'-5' exoribonuclease that plays an important role in tRNA 3'-end maturation. Removes nucleotide residues following the 3'-CCA terminus of tRNAs; can also add nucleotides to the ends of RNA molecules by using nucleoside diphosphates as substrates, but this may not be physiologically important. Probably plays a role in initiation of 16S rRNA degradation (leading to ribosome degradation) during starvation. In Neisseria meningitidis serogroup A / serotype 4A (strain DSM 15465 / Z2491), this protein is Ribonuclease PH.